Consider the following 172-residue polypeptide: Adenine phosphoribosyltransferase (172 aa).

The protein belongs to the purine/pyrimidine phosphoribosyltransferase family. In terms of assembly, homodimer.

The protein resides in the cytoplasm. The enzyme catalyses AMP + diphosphate = 5-phospho-alpha-D-ribose 1-diphosphate + adenine. It participates in purine metabolism; AMP biosynthesis via salvage pathway; AMP from adenine: step 1/1. Catalyzes a salvage reaction resulting in the formation of AMP, that is energically less costly than de novo synthesis. The chain is Adenine phosphoribosyltransferase from Synechocystis sp. (strain ATCC 27184 / PCC 6803 / Kazusa).